Here is a 446-residue protein sequence, read N- to C-terminus: D-inositol 3-phosphate glycosyltransferase (446 aa).

Positions methionine 1–leucine 21 are disordered. A 1D-myo-inositol 3-phosphate-binding site is contributed by histidine 34. UDP-N-acetyl-alpha-D-glucosamine is bound by residues glutamine 40–proline 41 and glycine 48. 1D-myo-inositol 3-phosphate-binding positions include aspartate 45–asparagine 50, lysine 103, tyrosine 136, threonine 160, and arginine 180. Arginine 255, lysine 260, and valine 321 together coordinate UDP-N-acetyl-alpha-D-glucosamine. Positions 330, 331, and 333 each coordinate Mg(2+). Residues glutamate 343 and glutamate 351 each contribute to the UDP-N-acetyl-alpha-D-glucosamine site. Threonine 357 contacts Mg(2+).

The protein belongs to the glycosyltransferase group 1 family. MshA subfamily. As to quaternary structure, homodimer.

It catalyses the reaction 1D-myo-inositol 3-phosphate + UDP-N-acetyl-alpha-D-glucosamine = 1D-myo-inositol 2-acetamido-2-deoxy-alpha-D-glucopyranoside 3-phosphate + UDP + H(+). Catalyzes the transfer of a N-acetyl-glucosamine moiety to 1D-myo-inositol 3-phosphate to produce 1D-myo-inositol 2-acetamido-2-deoxy-glucopyranoside 3-phosphate in the mycothiol biosynthesis pathway. In Streptomyces scabiei (strain 87.22), this protein is D-inositol 3-phosphate glycosyltransferase.